A 256-amino-acid polypeptide reads, in one-letter code: GCN5-related N-acetyltransferase 10, chloroplastic (256 aa).

The transit peptide at 1–41 directs the protein to the chloroplast; it reads MGHLPQSLYSAAGPKFPYPGSSGLGVDQRKLTWSRFPVFLR. Positions 106–256 constitute an N-acetyltransferase domain; the sequence is FMFFQAEVLS…RRVLMSKRFS (151 aa). Acetyl-CoA is bound by residues 178–180, 186–191, 217–219, and tyrosine 224; these read LAV, RKKMAS, and DAA. The active-site Proton donor is the tyrosine 224.

The protein belongs to the acetyltransferase family. GNAT subfamily. In terms of assembly, oligomer. In terms of processing, autoacetylated. Expressed in green tissues.

The protein resides in the plastid. It is found in the chloroplast. The enzyme catalyses an N-terminal L-alpha-aminoacyl-[protein] + acetyl-CoA = N-terminal N(alpha)-acetyl-L-alpha-aminoacyl-[protein] + CoA + H(+). It carries out the reaction L-lysyl-[protein] + acetyl-CoA = N(6)-acetyl-L-lysyl-[protein] + CoA + H(+). The catalysed reaction is N-terminal L-methionyl-[protein] + acetyl-CoA = N-terminal N(alpha)-acetyl-L-methionyl-[protein] + CoA + H(+). It catalyses the reaction N-terminal L-seryl-[protein] + acetyl-CoA = N-terminal N(alpha)-acetyl-L-seryl-[protein] + CoA + H(+). The enzyme catalyses N-terminal L-valyl-[protein] + acetyl-CoA = N-terminal N(alpha)-acetyl-L-valyl-[protein] + CoA + H(+). It carries out the reaction N-terminal L-threonyl-[protein] + acetyl-CoA = N-terminal N(alpha)-acetyl-L-threonyl-[protein] + CoA + H(+). The catalysed reaction is N-terminal L-alanyl-[protein] + acetyl-CoA = N-terminal N(alpha)-acetyl-L-alanyl-[protein] + CoA + H(+). It catalyses the reaction N-terminal glycyl-[protein] + acetyl-CoA = N-terminal N(alpha)-acetylglycyl-[protein] + CoA + H(+). Protein acetyltransferase with dual specificity triggering both N-alpha-acetylation (NTA), with a preference for leucine, methionine, serine, valine and to a lower extent threonine and alanine as substrates (can also use glycine), and epsilon-lysine acetylation (KA) of several plastid proteins. The polypeptide is GCN5-related N-acetyltransferase 10, chloroplastic (Arabidopsis thaliana (Mouse-ear cress)).